The chain runs to 316 residues: Glycine--tRNA ligase alpha subunit (316 aa).

It belongs to the class-II aminoacyl-tRNA synthetase family. Tetramer of two alpha and two beta subunits.

The protein localises to the cytoplasm. The enzyme catalyses tRNA(Gly) + glycine + ATP = glycyl-tRNA(Gly) + AMP + diphosphate. This Cupriavidus taiwanensis (strain DSM 17343 / BCRC 17206 / CCUG 44338 / CIP 107171 / LMG 19424 / R1) (Ralstonia taiwanensis (strain LMG 19424)) protein is Glycine--tRNA ligase alpha subunit.